The primary structure comprises 449 residues: Trigger factor (449 aa).

A PPIase FKBP-type domain is found at threonine 160 to glutamine 231. Residues glycine 411–glutamate 449 are disordered. A compositionally biased stretch (low complexity) spans alanine 415–alanine 443.

It belongs to the FKBP-type PPIase family. Tig subfamily.

It is found in the cytoplasm. The catalysed reaction is [protein]-peptidylproline (omega=180) = [protein]-peptidylproline (omega=0). Functionally, involved in protein export. Acts as a chaperone by maintaining the newly synthesized protein in an open conformation. Functions as a peptidyl-prolyl cis-trans isomerase. In Deinococcus geothermalis (strain DSM 11300 / CIP 105573 / AG-3a), this protein is Trigger factor.